Reading from the N-terminus, the 478-residue chain is Puromycin-sensitive aminopeptidase-like protein (478 aa).

Substrate contacts are provided by residues Glu-180 and 316–320; that span reads GAMEN. His-352 contacts Zn(2+). Glu-353 serves as the catalytic Proton acceptor. Residues His-356 and Glu-375 each coordinate Zn(2+).

This sequence belongs to the peptidase M1 family. It depends on Zn(2+) as a cofactor.

Aminopeptidase with broad substrate specificity to several peptides. This chain is Puromycin-sensitive aminopeptidase-like protein (NPEPPSL1), found in Homo sapiens (Human).